Reading from the N-terminus, the 159-residue chain is Eukaryotic translation initiation factor 5A (159 aa).

A Hypusine modification is found at Lys51.

The protein belongs to the eIF-5A family. Lys-51 undergoes hypusination, a unique post-translational modification that consists in the addition of a butylamino group from spermidine to lysine side chain, leading to the formation of the unusual amino acid hypusine. eIF-5As are the only known proteins to undergo this modification, which is essential for their function.

The protein localises to the cytoplasm. In terms of biological role, translation factor that promotes translation elongation and termination, particularly upon ribosome stalling at specific amino acid sequence contexts. Binds between the exit (E) and peptidyl (P) site of the ribosome and promotes rescue of stalled ribosome: specifically required for efficient translation of polyproline-containing peptides as well as other motifs that stall the ribosome. Acts as a ribosome quality control (RQC) cofactor by joining the RQC complex to facilitate peptidyl transfer during CAT tailing step. Functions as a regulator of autophagy. In Drosophila melanogaster (Fruit fly), this protein is Eukaryotic translation initiation factor 5A.